Reading from the N-terminus, the 314-residue chain is Acetyl-coenzyme A carboxylase carboxyl transferase subunit beta (314 aa).

In terms of domain architecture, CoA carboxyltransferase N-terminal spans 25 to 294; that stretch reads VWTKCDSCSQ…PGTKPIVAEF (270 aa). Residues cysteine 29, cysteine 32, cysteine 48, and cysteine 51 each contribute to the Zn(2+) site. The C4-type zinc-finger motif lies at 29–51; the sequence is CDSCSQVLYRAELERNLEVCPKC.

Belongs to the AccD/PCCB family. Acetyl-CoA carboxylase is a heterohexamer composed of biotin carboxyl carrier protein (AccB), biotin carboxylase (AccC) and two subunits each of ACCase subunit alpha (AccA) and ACCase subunit beta (AccD). Zn(2+) serves as cofactor.

It is found in the cytoplasm. It catalyses the reaction N(6)-carboxybiotinyl-L-lysyl-[protein] + acetyl-CoA = N(6)-biotinyl-L-lysyl-[protein] + malonyl-CoA. The protein operates within lipid metabolism; malonyl-CoA biosynthesis; malonyl-CoA from acetyl-CoA: step 1/1. Its function is as follows. Component of the acetyl coenzyme A carboxylase (ACC) complex. Biotin carboxylase (BC) catalyzes the carboxylation of biotin on its carrier protein (BCCP) and then the CO(2) group is transferred by the transcarboxylase to acetyl-CoA to form malonyl-CoA. The sequence is that of Acetyl-coenzyme A carboxylase carboxyl transferase subunit beta from Photorhabdus laumondii subsp. laumondii (strain DSM 15139 / CIP 105565 / TT01) (Photorhabdus luminescens subsp. laumondii).